The following is a 637-amino-acid chain: 3D-(3,5/4)-trihydroxycyclohexane-1,2-dione hydrolase (637 aa).

Residue E66 participates in thiamine diphosphate binding. The tract at residues S442 to G522 is thiamine pyrophosphate binding. Positions 493 and 520 each coordinate Mg(2+).

It belongs to the TPP enzyme family. The cofactor is Mg(2+). Requires thiamine diphosphate as cofactor.

The enzyme catalyses 3D-3,5/4-trihydroxycyclohexane-1,2-dione + H2O = 5-deoxy-D-glucuronate + H(+). The protein operates within polyol metabolism; myo-inositol degradation into acetyl-CoA; acetyl-CoA from myo-inositol: step 3/7. Involved in the cleavage of the C1-C2 bond of 3D-(3,5/4)-trihydroxycyclohexane-1,2-dione (THcHDO) to yield 5-deoxy-glucuronate (5DG). This Shouchella clausii (strain KSM-K16) (Alkalihalobacillus clausii) protein is 3D-(3,5/4)-trihydroxycyclohexane-1,2-dione hydrolase.